The chain runs to 299 residues: Recombination-associated protein RdgC (299 aa).

It belongs to the RdgC family.

Its subcellular location is the cytoplasm. The protein resides in the nucleoid. May be involved in recombination. This is Recombination-associated protein RdgC from Cupriavidus pinatubonensis (strain JMP 134 / LMG 1197) (Cupriavidus necator (strain JMP 134)).